Here is a 44-residue protein sequence, read N- to C-terminus: Photosystem I reaction center subunit IX (44 aa).

Residues 7–27 (YLSTAPVLATLWFGSLAGLLI) traverse the membrane as a helical segment.

This sequence belongs to the PsaJ family.

It localises to the plastid. The protein localises to the chloroplast thylakoid membrane. Its function is as follows. May help in the organization of the PsaE and PsaF subunits. This is Photosystem I reaction center subunit IX from Calycanthus floridus var. glaucus (Eastern sweetshrub).